The chain runs to 963 residues: Importin-13 (963 aa).

HEAT repeat units follow at residues 24–54 (ENVE…QAQV), 56–88 (PQAW…KISR), 95–135 (TDQY…LSMM), 142–179 (AVAD…EFQT), 194–231 (LAVE…SWVQ), 236–268 (LQDC…NAIS), 276–325 (VNTL…ALLD), 330–372 (WQSF…DDIL), 375–438 (EAEK…YEML), 440–476 (AELL…FQSI), 487–522 (VVPG…WLAD), 524–558 (PVMI…CREC), 562–600 (LPPY…LLSA), 603–648 (VEEI…SNLF), 676–716 (PVVV…VKTL), 720–754 (FAPM…VHIF), 761–803 (FPPI…ALKR), 815–845 (VKAV…TELL), 860–893 (EDGR…FALN), and 897–931 (FSLL…QQIL). The Importin N-terminal domain occupies 45 to 111 (AQKWLMQAQV…KAQLFTQITR (67 aa)).

This sequence belongs to the importin beta family. Interacts with UBC9, RAN, RBM8A, eIF-1A and PAX6.

It is found in the cytoplasm. It localises to the nucleus. Functionally, functions in nuclear protein import as nuclear transport receptor. Serves as receptor for nuclear localization signals (NLS) in cargo substrates. Is thought to mediate docking of the importin/substrate complex to the nuclear pore complex (NPC) through binding to nucleoporin and the complex is subsequently translocated through the pore by an energy requiring, Ran-dependent mechanism. At the nucleoplasmic side of the NPC, Ran binds to the importin, the importin/substrate complex dissociates and importin is re-exported from the nucleus to the cytoplasm where GTP hydrolysis releases Ran. The directionality of nuclear import is thought to be conferred by an asymmetric distribution of the GTP- and GDP-bound forms of Ran between the cytoplasm and nucleus. Mediates the nuclear import of UBC9, the RBM8A/MAGOH complex, PAX6 and probably other members of the paired homeobox family. Also mediates nuclear export of eIF-1A, and the cytoplasmic release of eIF-1A is triggered by the loading of import substrates onto IPO13. The chain is Importin-13 (Ipo13) from Mus musculus (Mouse).